Reading from the N-terminus, the 249-residue chain is 5'-nucleotidase SurE (249 aa).

A divalent metal cation is bound by residues Asp-8, Asp-9, Ser-39, and Asn-91.

Belongs to the SurE nucleotidase family. A divalent metal cation serves as cofactor.

Its subcellular location is the cytoplasm. It catalyses the reaction a ribonucleoside 5'-phosphate + H2O = a ribonucleoside + phosphate. In terms of biological role, nucleotidase that shows phosphatase activity on nucleoside 5'-monophosphates. This is 5'-nucleotidase SurE from Pseudomonas putida (strain ATCC 700007 / DSM 6899 / JCM 31910 / BCRC 17059 / LMG 24140 / F1).